The chain runs to 374 residues: Coiled-coil domain-containing protein 89 (374 aa).

The disordered stretch occupies residues 1–38; the sequence is MRAPMPQKEQAPRMDTSPPEERLEKQNEKLNNQEEEME. Thr-16 bears the Phosphothreonine mark. Residues 19-32 show a composition bias toward basic and acidic residues; it reads PEERLEKQNEKLNN. The stretch at 19–350 forms a coiled coil; the sequence is PEERLEKQNE…YDELRLQSEA (332 aa).

Belongs to the CCDC89 family. In terms of assembly, interacts with HEY1.

It localises to the cytoplasm. Its subcellular location is the nucleus. The chain is Coiled-coil domain-containing protein 89 (CCDC89) from Macaca fascicularis (Crab-eating macaque).